A 146-amino-acid polypeptide reads, in one-letter code: MTDKFDANDETRTVYAVVYDNDQPVSTGQFLAETKIEARLTRIVTLADYCGCGYGAKVTEALETYTRREGFYQLTIHSELTAQTFYENLGYQTYGSKYLEDGEYCQSLVKTILKWEKNMDIAMLIAIVGGLLGCYLYLTKNNEPKD.

Positions 1 to 120 (MTDKFDANDE…TILKWEKNMD (120 aa)) constitute an N-acetyltransferase domain.

Belongs to the acetyltransferase family.

This is an uncharacterized protein from Streptococcus pyogenes serotype M6 (strain ATCC BAA-946 / MGAS10394).